A 384-amino-acid chain; its full sequence is 1-deoxy-D-xylulose 5-phosphate reductoisomerase (384 aa).

NADPH-binding residues include Thr-11, Gly-12, Ser-13, Ile-14, Lys-38, and Asn-123. Lys-124 is a binding site for 1-deoxy-D-xylulose 5-phosphate. Glu-125 lines the NADPH pocket. Asp-148 is a binding site for Mn(2+). Residues Ser-149, Glu-150, Ser-174, and His-197 each coordinate 1-deoxy-D-xylulose 5-phosphate. Glu-150 serves as a coordination point for Mn(2+). Residue Gly-203 participates in NADPH binding. 1-deoxy-D-xylulose 5-phosphate-binding residues include Ser-210, Asn-215, Lys-216, and Glu-219. Residue Glu-219 coordinates Mn(2+).

It belongs to the DXR family. Mg(2+) serves as cofactor. Mn(2+) is required as a cofactor.

The catalysed reaction is 2-C-methyl-D-erythritol 4-phosphate + NADP(+) = 1-deoxy-D-xylulose 5-phosphate + NADPH + H(+). It functions in the pathway isoprenoid biosynthesis; isopentenyl diphosphate biosynthesis via DXP pathway; isopentenyl diphosphate from 1-deoxy-D-xylulose 5-phosphate: step 1/6. In terms of biological role, catalyzes the NADPH-dependent rearrangement and reduction of 1-deoxy-D-xylulose-5-phosphate (DXP) to 2-C-methyl-D-erythritol 4-phosphate (MEP). The polypeptide is 1-deoxy-D-xylulose 5-phosphate reductoisomerase (Halothermothrix orenii (strain H 168 / OCM 544 / DSM 9562)).